Here is a 347-residue protein sequence, read N- to C-terminus: Single-pass membrane and coiled-coil domain-containing protein 2 (347 aa).

The tract at residues 1-89 (MMSLQLGTAG…PPSKPDEQEV (89 aa)) is disordered. Basic and acidic residues-rich tracts occupy residues 10 to 21 (GKERQLAEKSRD), 36 to 51 (EMDH…DKPS), and 60 to 86 (YKMD…KPDE). Residues 139–238 (DWLERINNII…MNVLNSKLEM (100 aa)) are a coiled coil. Ser-178 carries the post-translational modification Phosphoserine. Residues 243-274 (GSDADSHNSEDVDTEQEEPLVPEASPSLSASP) are disordered. The segment covering 253–262 (DVDTEQEEPL) has biased composition (acidic residues). The span at 263 to 273 (VPEASPSLSAS) shows a compositional bias: low complexity. Residues 288–308 (LFVIVYVVTITGLSCYILFVD) form a helical membrane-spanning segment.

The protein resides in the membrane. In Mus musculus (Mouse), this protein is Single-pass membrane and coiled-coil domain-containing protein 2 (Smco2).